Reading from the N-terminus, the 156-residue chain is Large ribosomal subunit protein uL11 (156 aa).

Residues 1 to 20 (MAQSVKTMVEGGKATTGPPI) are disordered.

Belongs to the universal ribosomal protein uL11 family. Part of the ribosomal stalk of the 50S ribosomal subunit. Interacts with L10 and the large rRNA to form the base of the stalk. L10 forms an elongated spine to which L12 dimers bind in a sequential fashion forming a multimeric L10(L12)X complex.

Its function is as follows. Forms part of the ribosomal stalk which helps the ribosome interact with GTP-bound translation factors. The sequence is that of Large ribosomal subunit protein uL11 from Thermoplasma acidophilum (strain ATCC 25905 / DSM 1728 / JCM 9062 / NBRC 15155 / AMRC-C165).